Here is a 159-residue protein sequence, read N- to C-terminus: Pathogenesis-related leaf protein 4 (159 aa).

Positions 1-24 (MGLFNISLLLTCLMVLAIFHSCEA) are cleaved as a signal peptide. Glutamine 25 bears the Pyrrolidone carboxylic acid mark. Residues 32–147 (LAVHNDARAQ…NGWWFISCNY (116 aa)) enclose the SCP domain. 3 disulfide bridges follow: cysteine 68–cysteine 136, cysteine 109–cysteine 115, and cysteine 131–cysteine 145.

It belongs to the CRISP family.

Probably involved in the defense reaction of plants against pathogens. This Solanum lycopersicum (Tomato) protein is Pathogenesis-related leaf protein 4.